The following is a 200-amino-acid chain: HTH-type transcriptional regulator BetI (200 aa).

The HTH tetR-type domain occupies 8-68 (DIRKPQLVQA…ETMREILRQL (61 aa)). The segment at residues 31–50 (SIALISKEAGVSTGIINHYF) is a DNA-binding region (H-T-H motif).

The protein operates within amine and polyamine biosynthesis; betaine biosynthesis via choline pathway [regulation]. Repressor involved in the biosynthesis of the osmoprotectant glycine betaine. It represses transcription of the choline transporter BetT and the genes of BetAB involved in the synthesis of glycine betaine. The protein is HTH-type transcriptional regulator BetI of Vibrio atlanticus (strain LGP32) (Vibrio splendidus (strain Mel32)).